Here is a 77-residue protein sequence, read N- to C-terminus: Large ribosomal subunit protein bL31 (77 aa).

Belongs to the bacterial ribosomal protein bL31 family. Type A subfamily. Part of the 50S ribosomal subunit.

Binds the 23S rRNA. The polypeptide is Large ribosomal subunit protein bL31 (Microcystis aeruginosa (strain NIES-843 / IAM M-2473)).